The sequence spans 207 residues: Outer-membrane lipoprotein LolB (207 aa).

An N-terminal signal peptide occupies residues 1–21 (MPIRKVSLLRLIPLASLVLAA). A lipid anchor (N-palmitoyl cysteine) is attached at Cys22. A lipid anchor (S-diacylglycerol cysteine) is attached at Cys22.

It belongs to the LolB family. As to quaternary structure, monomer.

It localises to the cell outer membrane. Functionally, plays a critical role in the incorporation of lipoproteins in the outer membrane after they are released by the LolA protein. The polypeptide is Outer-membrane lipoprotein LolB (Serratia proteamaculans (strain 568)).